The chain runs to 517 residues: Crotonobetaine/carnitine--CoA ligase (517 aa).

This sequence belongs to the ATP-dependent AMP-binding enzyme family.

It catalyses the reaction 4-(trimethylamino)butanoate + ATP + CoA = 4-(trimethylamino)butanoyl-CoA + AMP + diphosphate. It carries out the reaction crotonobetaine + ATP + CoA = crotonobetainyl-CoA + AMP + diphosphate. The enzyme catalyses (R)-carnitine + ATP + CoA = (R)-carnitinyl-CoA + AMP + diphosphate. The protein operates within amine and polyamine metabolism; carnitine metabolism. Functionally, catalyzes the transfer of CoA to carnitine, generating the initial carnitinyl-CoA needed for the CaiB reaction cycle. Also has activity toward crotonobetaine and gamma-butyrobetaine. This Escherichia coli O6:K15:H31 (strain 536 / UPEC) protein is Crotonobetaine/carnitine--CoA ligase.